The following is a 922-amino-acid chain: Chaperone protein ClpC, chloroplastic (922 aa).

Residues 1-72 constitute a chloroplast transit peptide; that stretch reads MARVLAQSLS…RPGLDFHSKV (72 aa). The Clp R domain maps to 92–234; that stretch reads FERFTEKAIK…RTQVIRMVGE (143 aa). Repeat stretches follow at residues 95–160 and 170–234; these read FTEK…IGRG and FTPR…MVGE. Residues 255 to 502 form an i region; the sequence is LEEYGTNLTK…RVRLQHAQLP (248 aa). 300-307 contacts ATP; the sequence is GEPGVGKT. In terms of domain architecture, UVR spans 509–544; that stretch reads DKEVRKIVKEKEEYVRNQDFEKAGELRDKEMDLKAQ. Residues 569–760 are II; sequence VTEVDIQHIV…LLIMTSNVGS (192 aa). 643–650 is a binding site for ATP; it reads GPTGVGKS.

Belongs to the ClpA/ClpB family. ClpC subfamily.

It is found in the plastid. The protein localises to the chloroplast. Its function is as follows. Molecular chaperone that may interact with a ClpP-like protease involved in degradation of denatured proteins in the chloroplast. The polypeptide is Chaperone protein ClpC, chloroplastic (Pisum sativum (Garden pea)).